A 777-amino-acid chain; its full sequence is Lon protease (777 aa).

In terms of domain architecture, Lon N-terminal spans 11-204 (IPVLPLRDVV…FLMAIMESEI (194 aa)). 356-363 (GPPGVGKT) contacts ATP. The Lon proteolytic domain occupies 592–773 (TNQIGQVIGL…EEVLKLSLEK (182 aa)). Catalysis depends on residues Ser-679 and Lys-722.

It belongs to the peptidase S16 family. As to quaternary structure, homohexamer. Organized in a ring with a central cavity.

It localises to the cytoplasm. It carries out the reaction Hydrolysis of proteins in presence of ATP.. Its function is as follows. ATP-dependent serine protease that mediates the selective degradation of mutant and abnormal proteins as well as certain short-lived regulatory proteins. Required for cellular homeostasis and for survival from DNA damage and developmental changes induced by stress. Degrades polypeptides processively to yield small peptide fragments that are 5 to 10 amino acids long. Binds to DNA in a double-stranded, site-specific manner. The protein is Lon protease of Buchnera aphidicola subsp. Acyrthosiphon pisum (strain APS) (Acyrthosiphon pisum symbiotic bacterium).